The chain runs to 140 residues: Putative nickel-responsive regulator (140 aa).

The Ni(2+) site is built by H81, H92, H94, and C100.

It belongs to the transcriptional regulatory CopG/NikR family. The cofactor is Ni(2+).

In terms of biological role, transcriptional regulator. This chain is Putative nickel-responsive regulator, found in Methanococcoides burtonii (strain DSM 6242 / NBRC 107633 / OCM 468 / ACE-M).